We begin with the raw amino-acid sequence, 423 residues long: Glutamyl-tRNA reductase 2 (423 aa).

Residues 48 to 51, serine 103, 108 to 110, and glutamine 114 each bind substrate; these read TCYR and EPQ. The Nucleophile role is filled by cysteine 49. 183–188 is a binding site for NADP(+); it reads GAGEMA.

Belongs to the glutamyl-tRNA reductase family. In terms of assembly, homodimer.

It catalyses the reaction (S)-4-amino-5-oxopentanoate + tRNA(Glu) + NADP(+) = L-glutamyl-tRNA(Glu) + NADPH + H(+). It functions in the pathway porphyrin-containing compound metabolism; protoporphyrin-IX biosynthesis; 5-aminolevulinate from L-glutamyl-tRNA(Glu): step 1/2. Its function is as follows. Catalyzes the NADPH-dependent reduction of glutamyl-tRNA(Glu) to glutamate 1-semialdehyde (GSA). This Anaeromyxobacter sp. (strain Fw109-5) protein is Glutamyl-tRNA reductase 2.